A 425-amino-acid polypeptide reads, in one-letter code: Serine--tRNA ligase (425 aa).

230–232 (TAE) provides a ligand contact to L-serine. Residue 261–263 (RAE) coordinates ATP. Position 284 (glutamate 284) interacts with L-serine. Residue 348–351 (EISS) coordinates ATP. Position 384 (serine 384) interacts with L-serine.

This sequence belongs to the class-II aminoacyl-tRNA synthetase family. Type-1 seryl-tRNA synthetase subfamily. Homodimer. The tRNA molecule binds across the dimer.

Its subcellular location is the cytoplasm. The catalysed reaction is tRNA(Ser) + L-serine + ATP = L-seryl-tRNA(Ser) + AMP + diphosphate + H(+). It carries out the reaction tRNA(Sec) + L-serine + ATP = L-seryl-tRNA(Sec) + AMP + diphosphate + H(+). It functions in the pathway aminoacyl-tRNA biosynthesis; selenocysteinyl-tRNA(Sec) biosynthesis; L-seryl-tRNA(Sec) from L-serine and tRNA(Sec): step 1/1. Its function is as follows. Catalyzes the attachment of serine to tRNA(Ser). Is also able to aminoacylate tRNA(Sec) with serine, to form the misacylated tRNA L-seryl-tRNA(Sec), which will be further converted into selenocysteinyl-tRNA(Sec). This chain is Serine--tRNA ligase, found in Zymomonas mobilis subsp. mobilis (strain ATCC 31821 / ZM4 / CP4).